Here is a 220-residue protein sequence, read N- to C-terminus: Ribosomal RNA small subunit methyltransferase G (220 aa).

S-adenosyl-L-methionine is bound by residues glycine 78, phenylalanine 83, 129–130 (GE), and arginine 146.

This sequence belongs to the methyltransferase superfamily. RNA methyltransferase RsmG family.

The protein resides in the cytoplasm. The catalysed reaction is guanosine(527) in 16S rRNA + S-adenosyl-L-methionine = N(7)-methylguanosine(527) in 16S rRNA + S-adenosyl-L-homocysteine. Functionally, specifically methylates the N7 position of guanine in position 527 of 16S rRNA. This chain is Ribosomal RNA small subunit methyltransferase G, found in Geobacter metallireducens (strain ATCC 53774 / DSM 7210 / GS-15).